The sequence spans 245 residues: Ribonuclease P protein component 3 (245 aa).

Belongs to the eukaryotic/archaeal RNase P protein component 3 family. As to quaternary structure, consists of a catalytic RNA component and at least 4-5 protein subunits.

The protein localises to the cytoplasm. The catalysed reaction is Endonucleolytic cleavage of RNA, removing 5'-extranucleotides from tRNA precursor.. Part of ribonuclease P, a protein complex that generates mature tRNA molecules by cleaving their 5'-ends. The polypeptide is Ribonuclease P protein component 3 (Methanothermobacter thermautotrophicus (strain ATCC 29096 / DSM 1053 / JCM 10044 / NBRC 100330 / Delta H) (Methanobacterium thermoautotrophicum)).